A 256-amino-acid polypeptide reads, in one-letter code: Eukaryotic translation initiation factor 3 subunit J (256 aa).

The tract at residues 1–67 (MAAAAAGDSD…KEEAEVKPEV (67 aa)) is sufficient for interaction with EIF3B. The tract at residues 1-106 (MAAAAAGDSD…LEEPEEPKVL (106 aa)) is disordered. Residues Ser9, Ser11, and Ser18 each carry the phosphoserine modification. The span at 38–57 (EGEDEDEDVKDNWDDDDDEK) shows a compositional bias: acidic residues. Positions 58–104 (KEEAEVKPEVKISEKKKIAEKIKEKERQQKKRQEEIKKRLEEPEEPK) are enriched in basic and acidic residues. Residues 68–133 (KISEKKKIAE…ESDLELAKET (66 aa)) adopt a coiled-coil conformation. A Glycyl lysine isopeptide (Lys-Gly) (interchain with G-Cter in SUMO2) cross-link involves residue Lys104. Thr107 bears the Phosphothreonine mark. Ser125 carries the phosphoserine modification. Residues 214 to 243 (QSKAKKKKKGVVPGGGLKATMKDDLADYGG) are disordered. A promotes stable association with the 40S ribosome region spans residues 241–256 (YGGYDGGYAQDYEDFM). Residue Tyr252 is modified to Phosphotyrosine.

It belongs to the eIF-3 subunit J family. In terms of assembly, component of the eukaryotic translation initiation factor 3 (eIF-3) complex, which is composed of 13 subunits: EIF3A, EIF3B, EIF3C, EIF3D, EIF3E, EIF3F, EIF3G, EIF3H, EIF3I, EIF3J, EIF3K, EIF3L and EIF3M. The eIF-3 complex appears to include 3 stable modules: module A is composed of EIF3A, EIF3B, EIF3G and EIF3I; module B is composed of EIF3F, EIF3H, and EIF3M; and module C is composed of EIF3C, EIF3D, EIF3E, EIF3K and EIF3L. EIF3C of module C binds EIF3B of module A and EIF3H of module B, thereby linking the three modules. EIF3J is a labile subunit that binds to the eIF-3 complex via EIF3B. The eIF-3 complex interacts with RPS6KB1 under conditions of nutrient depletion. Mitogenic stimulation leads to binding and activation of a complex composed of MTOR and RPTOR, leading to phosphorylation and release of RPS6KB1 and binding of EIF4B to eIF-3. Phosphorylated. Phosphorylation is enhanced upon serum stimulation.

It is found in the cytoplasm. Functionally, component of the eukaryotic translation initiation factor 3 (eIF-3) complex, which is required for several steps in the initiation of protein synthesis. The eIF-3 complex associates with the 40S ribosome and facilitates the recruitment of eIF-1, eIF-1A, eIF-2:GTP:methionyl-tRNAi and eIF-5 to form the 43S pre-initiation complex (43S PIC). The eIF-3 complex stimulates mRNA recruitment to the 43S PIC and scanning of the mRNA for AUG recognition. The eIF-3 complex is also required for disassembly and recycling of post-termination ribosomal complexes and subsequently prevents premature joining of the 40S and 60S ribosomal subunits prior to initiation. The eIF-3 complex specifically targets and initiates translation of a subset of mRNAs involved in cell proliferation, including cell cycling, differentiation and apoptosis, and uses different modes of RNA stem-loop binding to exert either translational activation or repression. This subunit binds directly within the mRNA entry channel of the 40S ribosome to the aminoacyl (A) site. It may regulate the interaction between the 43S PIC and mRNA. This Bos taurus (Bovine) protein is Eukaryotic translation initiation factor 3 subunit J.